Reading from the N-terminus, the 669-residue chain is uncharacterized protein (669 aa).

12 consecutive transmembrane segments (helical) span residues 9-29 (PLVI…IFIA), 48-68 (FSWF…ILSV), 87-107 (FLSW…MFFG), 139-159 (WGIH…YFGF), 186-206 (AIDV…LGFG), 224-244 (SFAL…FSAI), 259-279 (LTLA…LYLL), 314-334 (WTVL…LFIA), 345-365 (FIFG…TVFG), 397-417 (YLPL…LFFI), 444-464 (AIMW…SGGL), and 470-490 (MTLI…FSLW).

Belongs to the BCCT transporter (TC 2.A.15) family.

The protein resides in the cell inner membrane. This is an uncharacterized protein from Haemophilus influenzae (strain ATCC 51907 / DSM 11121 / KW20 / Rd).